The primary structure comprises 344 residues: L-rhamnose-proton symporter (344 aa).

10 helical membrane-spanning segments follow: residues 4–24, 38–58, 72–92, 101–121, 137–157, 175–195, 214–234, 259–279, 290–310, and 321–341; these read AITM…CFYA, WSVG…AILL, TLLP…NYGL, MGIG…TPIL, TLLG…AGQL, LVLA…MNAA, LPSY…FCFI, VLLS…YAWG, MSWM…GLVL, and VGVL…VGLG.

Belongs to the L-rhamnose transporter (TC 2.A.7.6) family.

It is found in the cell inner membrane. The catalysed reaction is L-rhamnopyranose(in) + H(+)(in) = L-rhamnopyranose(out) + H(+)(out). Its function is as follows. Uptake of L-rhamnose across the cytoplasmic membrane with the concomitant transport of protons into the cell (symport system). This Enterobacter sp. (strain 638) protein is L-rhamnose-proton symporter.